We begin with the raw amino-acid sequence, 413 residues long: 3-hydroxy-3-methylglutaryl-coenzyme A reductase (413 aa).

Residues E106 and D312 each act as charge relay system in the active site. H408 acts as the Proton donor in catalysis.

Belongs to the HMG-CoA reductase family.

It carries out the reaction (R)-mevalonate + 2 NADP(+) + CoA = (3S)-3-hydroxy-3-methylglutaryl-CoA + 2 NADPH + 2 H(+). Its pathway is metabolic intermediate biosynthesis; (R)-mevalonate biosynthesis; (R)-mevalonate from acetyl-CoA: step 3/3. Functionally, converts HMG-CoA to mevalonate. The polypeptide is 3-hydroxy-3-methylglutaryl-coenzyme A reductase (hmgA) (Pyrococcus horikoshii (strain ATCC 700860 / DSM 12428 / JCM 9974 / NBRC 100139 / OT-3)).